The following is a 99-amino-acid chain: Small integral membrane protein 14 (99 aa).

Residues 1 to 49 (MAEGGFDPCECVCSHEHAMRRLINLLRQSQSYCTDTECLQELPGPSGDN) lie on the Lumenal side of the membrane. Residues 50–70 (GISVTMILVAWMVIALILFLL) form a helical membrane-spanning segment. Residues 71 to 99 (RPPNLRGSSLPGKPTSPHNGQDPPAPPVD) lie on the Cytoplasmic side of the membrane. The segment at 78-99 (SSLPGKPTSPHNGQDPPAPPVD) is disordered.

The protein resides in the endoplasmic reticulum membrane. This is Small integral membrane protein 14 (SMIM14) from Homo sapiens (Human).